The sequence spans 515 residues: 1-pyrroline-5-carboxylate dehydrogenase (515 aa).

Active-site residues include Glu286 and Cys320.

Belongs to the aldehyde dehydrogenase family. RocA subfamily.

It carries out the reaction L-glutamate 5-semialdehyde + NAD(+) + H2O = L-glutamate + NADH + 2 H(+). It functions in the pathway amino-acid degradation; L-proline degradation into L-glutamate; L-glutamate from L-proline: step 2/2. In Geobacillus sp. (strain WCH70), this protein is 1-pyrroline-5-carboxylate dehydrogenase.